The chain runs to 635 residues: Probable serine/threonine-protein kinase DDB_G0270146 (635 aa).

The 253-residue stretch at 77 to 329 folds into the Protein kinase domain; the sequence is VISDIAIGKG…AKELLSHPWI (253 aa). ATP-binding positions include 83-91 and lysine 106; that span reads IGKGAFATV. Catalysis depends on aspartate 199, which acts as the Proton acceptor. Over residues 360-392 the composition is skewed to low complexity; sequence SLLSNSSGGDDSVTDSDLSISNQSSRSSSFLLD. Residues 360–405 are disordered; that stretch reads SLLSNSSGGDDSVTDSDLSISNQSSRSSSFLLDDGGGGGGSKNHTV. Coiled-coil stretches lie at residues 417-456 and 536-585; these read IEFN…KYRE and KKAL…KDSS. Over residues 540-582 the composition is skewed to basic and acidic residues; sequence EAQKRREKEQEKLKEQEKLKEKKKEKDIKKEKDKKDKKDKQLK. The disordered stretch occupies residues 540–635; it reads EAQKRREKEQ…GRSSSKIFNE (96 aa). Positions 583 to 598 are enriched in low complexity; it reads DSSSSTTTTNSTPSTP. Residues 626-635 show a composition bias toward polar residues; that stretch reads GRSSSKIFNE.

It belongs to the protein kinase superfamily. STE Ser/Thr protein kinase family. Mg(2+) serves as cofactor.

The catalysed reaction is L-seryl-[protein] + ATP = O-phospho-L-seryl-[protein] + ADP + H(+). The enzyme catalyses L-threonyl-[protein] + ATP = O-phospho-L-threonyl-[protein] + ADP + H(+). In Dictyostelium discoideum (Social amoeba), this protein is Probable serine/threonine-protein kinase DDB_G0270146.